A 278-amino-acid polypeptide reads, in one-letter code: 1-acyl-sn-glycerol-3-phosphate acyltransferase beta (278 aa).

The signal sequence occupies residues 1–23; that stretch reads MELWPCLAAALLLLLLLVQLSRA. Residues 24–29 are Lumenal-facing; sequence AEFYAK. Residues 30–50 form a helical membrane-spanning segment; it reads VALYCALCFTVSAVASLVCLL. The Cytoplasmic segment spans residues 51–121; sequence RHGGRTVENM…PERCVQIAKR (71 aa). An HXXXXD motif motif is present at residues 98–103; the sequence is HQSILD. A helical transmembrane segment spans residues 122–142; sequence ELLFLGPVGLIMYLGGVFFIN. Over 143-278 the chain is Lumenal; sequence RQRSSTAMTV…TAGSGVQPAQ (136 aa). Positions 172-175 match the EGTR motif motif; sequence EGTR.

It belongs to the 1-acyl-sn-glycerol-3-phosphate acyltransferase family. As to expression, expressed predominantly in adipose tissue, pancreas and liver.

The protein resides in the endoplasmic reticulum membrane. It carries out the reaction a 1-acyl-sn-glycero-3-phosphate + an acyl-CoA = a 1,2-diacyl-sn-glycero-3-phosphate + CoA. It catalyses the reaction 1-(9Z-octadecenoyl)-sn-glycero-3-phosphate + (9Z)-octadecenoyl-CoA = 1,2-di-(9Z-octadecenoyl)-sn-glycero-3-phosphate + CoA. The enzyme catalyses 1-(9Z-octadecenoyl)-sn-glycero-3-phosphate + hexadecanoyl-CoA = 1-(9Z)-octadecenoyl-2-hexadecanoyl-sn-glycero-3-phosphate + CoA. The catalysed reaction is heptadecanoyl-CoA + 1-(9Z-octadecenoyl)-sn-glycero-3-phosphate = 1-(9Z)-octadecenoyl-2-heptadecanoyl-sn-glycero-3-phosphate + CoA. It carries out the reaction 1-(9Z-octadecenoyl)-sn-glycero-3-phosphate + (9Z,12Z)-octadecadienoyl-CoA = 1-(9Z)-octadecenoyl-2-(9Z,12Z)-octadecadienoyl-sn-glycero-3-phosphate + CoA. It catalyses the reaction 1-(9Z-octadecenoyl)-sn-glycero-3-phosphate + tetradecanoyl-CoA = 1-(9Z)-octadecenoyl-2-tetradecanoyl-sn-glycero-3-phosphate + CoA. The enzyme catalyses pentadecanoyl-CoA + 1-(9Z-octadecenoyl)-sn-glycero-3-phosphate = 1-(9Z)-octadecenoyl-2-pentadecanoyl-sn-glycero-3-phosphate + CoA. The catalysed reaction is 1-hexadecanoyl-sn-glycero-3-phosphate + (9Z)-octadecenoyl-CoA = 1-hexadecanoyl-2-(9Z-octadecenoyl)-sn-glycero-3-phosphate + CoA. It carries out the reaction 1-tetradecanoyl-sn-glycerol 3-phosphate + (9Z)-octadecenoyl-CoA = 1-tetradecanoyl-2-(9Z)-octadecenoyl-sn-glycero-3-phosphate + CoA. It catalyses the reaction 1-(9Z,12Z,15Z)-octadecatrienoyl-sn-glycero-3-phosphate + (9Z)-octadecenoyl-CoA = 1-(9Z,12Z,15Z)-octadecatrienoyl-2-(9Z)-octadecenoyl-sn-glycero-3-phosphate + CoA. The enzyme catalyses 1-(6Z,9Z,12Z-octadecatrienoyl)-sn-glycero-3-phosphate + (9Z)-octadecenoyl-CoA = (6Z,9Z,12Z)-octadecatrienoyl-2-(9Z)-octadecenoyl-sn-glycero-3-phosphate + CoA. The catalysed reaction is 1-eicosanoyl-sn-glycero-3-phosphate + (9Z)-octadecenoyl-CoA = 1-eicosanoyl-2-(9Z)-octadecenoyl-sn-glycero-3-phosphate + CoA. It carries out the reaction 1-hexadecanoyl-sn-glycero-3-phosphate + octadecanoyl-CoA = 1-hexadecanoyl-2-octadecanoyl-sn-glycero-3-phosphate + CoA. It catalyses the reaction 1-hexadecanoyl-sn-glycero-3-phosphate + (5Z,8Z,11Z,14Z)-eicosatetraenoyl-CoA = 1-hexadecanoyl-2-(5Z,8Z,11Z,14Z-eicosatetraenoyl)-sn-glycero-3-phosphate + CoA. The enzyme catalyses 1-hexadecanoyl-sn-glycero-3-phosphate + hexadecanoyl-CoA = 1,2-dihexadecanoyl-sn-glycero-3-phosphate + CoA. The catalysed reaction is 1-hexadecanoyl-sn-glycero-3-phosphate + tetradecanoyl-CoA = 1-hexadecanoyl-2-tetradecanoyl-sn-glycero-3-phosphate + CoA. It carries out the reaction (11Z)-octadecenoyl-CoA + 1-(9Z-octadecenoyl)-sn-glycero-3-phosphate = 1-(9Z)-octadecenoyl-2-(11Z)-octadecenoyl-sn-glycero-3-phosphate + CoA. Its pathway is phospholipid metabolism; CDP-diacylglycerol biosynthesis; CDP-diacylglycerol from sn-glycerol 3-phosphate: step 2/3. Functionally, converts 1-acyl-sn-glycerol-3-phosphate (lysophosphatidic acid or LPA) into 1,2-diacyl-sn-glycerol-3-phosphate (phosphatidic acid or PA) by incorporating an acyl moiety at the sn-2 position of the glycerol backbone. The chain is 1-acyl-sn-glycerol-3-phosphate acyltransferase beta (AGPAT2) from Homo sapiens (Human).